Reading from the N-terminus, the 318-residue chain is Protein-L-histidine N-pros-methyltransferase (318 aa).

Positions 1-18 are cleaved as a signal peptide; it reads MRLLAGWLCLSLASVWLA. Residue asparagine 35 is glycosylated (N-linked (GlcNAc...) asparagine). Residues glutamate 174, asparagine 210, and tyrosine 295 each coordinate S-adenosyl-L-homocysteine.

This sequence belongs to the METTL9 family.

The protein localises to the endoplasmic reticulum. Its subcellular location is the mitochondrion. The catalysed reaction is L-histidyl-[protein] + S-adenosyl-L-methionine = N(pros)-methyl-L-histidyl-[protein] + S-adenosyl-L-homocysteine + H(+). Functionally, protein-histidine N-methyltransferase that specifically catalyzes 1-methylhistidine (pros-methylhistidine) methylation of target proteins. Specifically methylates the second His of proteins with a His-x-His (HxH) motif (where 'x' is preferably a small amino acid), while exploiting the first one as a recognition signature. Catalyzes methylation of target proteins such as S100A9, NDUFB3, SLC39A5, SLC39A7, ARMC6 and DNAJB12; 1-methylhistidine modification may affect the binding of zinc and other metals to its target proteins. Constitutes the main methyltransferase for the 1-methylhistidine modification in cell. This is Protein-L-histidine N-pros-methyltransferase from Homo sapiens (Human).